We begin with the raw amino-acid sequence, 485 residues long: Cysteine protease atg4da (485 aa).

Residues 22–46 (ASASSKRHLGHGAVPDGIREGSGEP) form a disordered region. Cys131 serves as the catalytic Nucleophile. Catalysis depends on residues Asp368 and His370.

It belongs to the peptidase C54 family.

Its subcellular location is the cytoplasm. The enzyme catalyses [protein]-C-terminal L-amino acid-glycyl-phosphatidylethanolamide + H2O = [protein]-C-terminal L-amino acid-glycine + a 1,2-diacyl-sn-glycero-3-phosphoethanolamine. It catalyses the reaction [protein]-C-terminal L-amino acid-glycyl-phosphatidylserine + H2O = [protein]-C-terminal L-amino acid-glycine + a 1,2-diacyl-sn-glycero-3-phospho-L-serine. In terms of biological role, cysteine protease that plays a key role in autophagy by mediating both proteolytic activation and delipidation of ATG8 family proteins. The protease activity is required for proteolytic activation of ATG8 family proteins to reveal a C-terminal glycine. Exposure of the glycine at the C-terminus is essential for ATG8 proteins conjugation to phosphatidylethanolamine (PE) and insertion to membranes, which is necessary for autophagy. In addition to the protease activity, also mediates delipidation of ATG8 family proteins. Catalyzes delipidation of PE-conjugated forms of ATG8 proteins during macroautophagy. Also involved in non-canonical autophagy, a parallel pathway involving conjugation of ATG8 proteins to single membranes at endolysosomal compartments, by catalyzing delipidation of ATG8 proteins conjugated to phosphatidylserine (PS). ATG4D plays a role in the autophagy-mediated neuronal homeostasis in the central nervous system. This chain is Cysteine protease atg4da, found in Danio rerio (Zebrafish).